A 450-amino-acid chain; its full sequence is Phosphoglucosamine mutase (450 aa).

Serine 103 (phosphoserine intermediate) is an active-site residue. The Mg(2+) site is built by serine 103, aspartate 243, aspartate 245, and aspartate 247. At serine 103 the chain carries Phosphoserine.

Belongs to the phosphohexose mutase family. It depends on Mg(2+) as a cofactor. Activated by phosphorylation.

The catalysed reaction is alpha-D-glucosamine 1-phosphate = D-glucosamine 6-phosphate. In terms of biological role, catalyzes the conversion of glucosamine-6-phosphate to glucosamine-1-phosphate. The protein is Phosphoglucosamine mutase of Lactobacillus helveticus (strain DPC 4571).